Consider the following 164-residue polypeptide: HTH-type transcriptional regulator PapX (164 aa).

The region spanning 25-159 (EHLLMQLCIR…FEVISKKLLA (135 aa)) is the HTH marR-type domain.

It localises to the cytoplasm. The chain is HTH-type transcriptional regulator PapX (papX) from Escherichia coli.